The sequence spans 261 residues: Prostate-specific antigen (261 aa).

The N-terminal stretch at 1–17 is a signal peptide; that stretch reads MWVPVVFLTLSVTWIGA. A propeptide spans 18 to 24 (activation peptide); it reads APLILSR. The region spanning 25-258 is the Peptidase S1 domain; sequence IVGGWECEKH…YRKWIKDTIV (234 aa). Intrachain disulfides connect C31/C173, C50/C66, C152/C219, C184/C198, and C209/C234. H65 serves as the catalytic Charge relay system. N-linked (GlcNAc...) asparagine glycosylation is present at N69. The Charge relay system role is filled by D120. Residue S213 is the Charge relay system of the active site.

It belongs to the peptidase S1 family. Kallikrein subfamily. As to quaternary structure, forms a heterodimer with SERPINA5.

The protein resides in the secreted. It carries out the reaction Preferential cleavage: -Tyr-|-Xaa-.. With respect to regulation, inhibited by SERPINA5. Activity is strongly inhibited by Zn2+, 100 times more abundant in semen than in serum. This inhibition is relieved by exposure to semenogelins, which are avid zinc binders. Its function is as follows. Hydrolyzes semenogelin-1 thus leading to the liquefaction of the seminal coagulum. The polypeptide is Prostate-specific antigen (KLK3) (Homo sapiens (Human)).